The sequence spans 158 residues: Small ribosomal subunit protein uS9 (158 aa).

It belongs to the universal ribosomal protein uS9 family.

In Rhodopseudomonas palustris (strain HaA2), this protein is Small ribosomal subunit protein uS9.